Here is a 610-residue protein sequence, read N- to C-terminus: UvrABC system protein C (610 aa).

Residues 16-94 enclose the GIY-YIG domain; sequence SQPGVYRMYD…IKLYQPRYNV (79 aa). The region spanning 204 to 239 is the UVR domain; that stretch reads DQVLTQLIARMEKASQDLAFEEAARIRDQIQAVRRV.

This sequence belongs to the UvrC family. As to quaternary structure, interacts with UvrB in an incision complex.

The protein localises to the cytoplasm. In terms of biological role, the UvrABC repair system catalyzes the recognition and processing of DNA lesions. UvrC both incises the 5' and 3' sides of the lesion. The N-terminal half is responsible for the 3' incision and the C-terminal half is responsible for the 5' incision. In Salmonella agona (strain SL483), this protein is UvrABC system protein C.